A 291-amino-acid chain; its full sequence is Undecaprenyl-diphosphatase (291 aa).

8 consecutive transmembrane segments (helical) span residues M1–F21, S48–F68, L102–I122, L126–A146, I162–F182, S203–L223, I231–A251, and F267–I287.

It belongs to the UppP family.

It localises to the cell membrane. The enzyme catalyses di-trans,octa-cis-undecaprenyl diphosphate + H2O = di-trans,octa-cis-undecaprenyl phosphate + phosphate + H(+). In terms of biological role, catalyzes the dephosphorylation of undecaprenyl diphosphate (UPP). Confers resistance to bacitracin. This chain is Undecaprenyl-diphosphatase, found in Staphylococcus aureus (strain USA300).